The sequence spans 574 residues: Serine carboxypeptidase ctsa-3.1 (574 aa).

The signal sequence occupies residues 1-19; that stretch reads MCRTLLGVAFLVVTVLSQG. Asn-48 and Asn-163 each carry an N-linked (GlcNAc...) asparagine glycan. Ser-172 is an active-site residue. N-linked (GlcNAc...) asparagine glycans are attached at residues Asn-241, Asn-408, Asn-414, and Asn-426. Active-site residues include Asp-441 and His-507. A glycan (N-linked (GlcNAc...) asparagine) is linked at Asn-534.

This sequence belongs to the peptidase S10 family.

The sequence is that of Serine carboxypeptidase ctsa-3.1 from Caenorhabditis elegans.